The chain runs to 145 residues: Putative pre-16S rRNA nuclease (145 aa).

It belongs to the YqgF nuclease family.

It localises to the cytoplasm. In terms of biological role, could be a nuclease involved in processing of the 5'-end of pre-16S rRNA. This Microcystis aeruginosa (strain NIES-843 / IAM M-2473) protein is Putative pre-16S rRNA nuclease.